A 215-amino-acid polypeptide reads, in one-letter code: MASRNNCSSSGNCSSGSLRNTCHIPASSSIALCSTNMGCGEVFCVPSSCQDHTWFMDNCPETFAEPLSGQPPSREASGFENSCCSSTYCVPRHCQGSGYIPASSFISGSCLPASYRPVSYVSSSCRPVSPFMNNCRPVSCVSGGYRPLPCGSNSCRPLGIVTYGCRPSGCVTYGPQTIHIVSNSLRPLQPVCGGCQPSIPVFGTCRPSCSAQGGQ.

Belongs to the PMG family. As to quaternary structure, interacts with hair keratins.

Functionally, in the hair cortex, hair keratin intermediate filaments are embedded in an interfilamentous matrix, consisting of hair keratin-associated proteins (KRTAP), which are essential for the formation of a rigid and resistant hair shaft through their extensive disulfide bond cross-linking with abundant cysteine residues of hair keratins. The matrix proteins include the high-sulfur and high-glycine-tyrosine keratins. The chain is Keratin-associated protein 26-1 from Mus musculus (Mouse).